Consider the following 1087-residue polypeptide: Exportin-7 (1087 aa).

The residue at position 2 (Ala-2) is an N-acetylalanine. The Importin N-terminal domain maps to Ala-30–Thr-96. Ser-570 bears the Phosphoserine mark.

It belongs to the exportin family. Binds to nucleoporins. Found in a complex with XPO7, EIF4A1, ARHGAP1, VPS26A, VPS29, VPS35 and SFN. Interacts with ARHGAP1 and SFN. Interacts with Ran and cargo proteins in a GTP-dependent manner.

Its subcellular location is the cytoplasm. It localises to the nucleus. The protein localises to the nuclear pore complex. Functionally, mediates the nuclear export of proteins (cargos) with broad substrate specificity. In the nucleus binds cooperatively to its cargo and to the GTPase Ran in its active GTP-bound form. Docking of this trimeric complex to the nuclear pore complex (NPC) is mediated through binding to nucleoporins. Upon transit of a nuclear export complex into the cytoplasm, disassembling of the complex and hydrolysis of Ran-GTP to Ran-GDP (induced by RANBP1 and RANGAP1, respectively) cause release of the cargo from the export receptor. XPO7 then return to the nuclear compartment and mediate another round of transport. The directionality of nuclear export is thought to be conferred by an asymmetric distribution of the GTP- and GDP-bound forms of Ran between the cytoplasm and nucleus. This Pongo abelii (Sumatran orangutan) protein is Exportin-7 (XPO7).